A 403-amino-acid polypeptide reads, in one-letter code: Protein-export membrane protein SecD (403 aa).

Transmembrane regions (helical) follow at residues 13–33, 245–265, 285–305, 306–326, 347–367, and 368–388; these read LLVI…KGVN, FLKM…VIIA, VVFL…PALA, GIIL…DEIV, VVLA…VAGM, and GLLK…VVIT.

This sequence belongs to the SecD/SecF family. SecD subfamily. Part of the protein translocation apparatus. Forms a complex with SecF.

The protein localises to the cell membrane. Its function is as follows. Involved in protein export. The sequence is that of Protein-export membrane protein SecD from Methanopyrus kandleri (strain AV19 / DSM 6324 / JCM 9639 / NBRC 100938).